A 1169-amino-acid chain; its full sequence is Protein MBD-R2 (1169 aa).

A THAP-type zinc finger spans residues 5–59 (CCVANCPSTSRLLEHNGVTYHSFPLDPIIRAIWIKNSRISLERQITKSVLVCSRH). 3 disordered regions span residues 99–122 (RALQHASVEGTTETPGNAQSSTND), 140–211 (SAER…KYSN), and 347–394 (AEEG…CAPQ). Residues 107–122 (EGTTETPGNAQSSTND) are compositionally biased toward polar residues. The segment covering 140 to 160 (SAERKATEEGKTGKAADDVKN) has biased composition (basic and acidic residues). The span at 190–202 (PAPGSASSSNSPL) shows a compositional bias: low complexity. Residues 353–363 (KSPTPVGTPVS) show a composition bias toward polar residues. An MBD domain is found at 445–514 (KPTVIVQDWR…DVYDFSIHRR (70 aa)). The segment at 527-565 (GYNPQPPPKPRPMDVSMNSTLDQSITSQHSLPSTPMPVK) is disordered. Over residues 542–559 (SMNSTLDQSITSQHSLPS) the composition is skewed to polar residues. The C2H2-type zinc finger occupies 640–665 (YVCPREDCAKTYRKEDFLLIHIRHYH). Residues 714–890 (QDLQQSRSFK…INAALAPPPA (177 aa)) are disordered. Over residues 726–742 (SVSATATSSTPSDITPT) the composition is skewed to low complexity. A compositionally biased stretch (polar residues) spans 774–784 (PTQSFNPSLSR). Positions 798 to 810 (SGSRKSNRQRSQR) are enriched in basic residues. 2 stretches are compositionally biased toward polar residues: residues 853–862 (AATTPISSID) and 869–881 (SVSTPSSNDQTDI).

Component of the non-specific lethal (NLS) histone acetyltransferase complex at least composed of mof, nls1, dgt1/NSL2, Rcd1/NSL3, Rcd5/MCRS2, MBD-R2 and wds.

Its subcellular location is the nucleus. It localises to the chromosome. In terms of biological role, component of the non-specific lethal (NLS) complex, a multiprotein complex that promotes expression of housekeeping genes on X chromosome and autosomes. The chain is Protein MBD-R2 from Drosophila melanogaster (Fruit fly).